A 170-amino-acid polypeptide reads, in one-letter code: Cytochrome c-type biogenesis protein CcmE (170 aa).

Residues 1-7 are Cytoplasmic-facing; it reads MTRKKRR. A helical; Signal-anchor for type II membrane protein membrane pass occupies residues 8 to 28; it reads LILIAACGSVLALAVGLILYA. The Periplasmic segment spans residues 29–170; it reads MSGSIVFFRS…DSTLGPRSER (142 aa). 2 residues coordinate heme: H122 and Y126. The interval 132–170 is disordered; the sequence is ADALKAQGRWQEGGPNRGGPAPKPATAAADSTLGPRSER.

The protein belongs to the CcmE/CycJ family.

The protein resides in the cell inner membrane. Its function is as follows. Heme chaperone required for the biogenesis of c-type cytochromes. Transiently binds heme delivered by CcmC and transfers the heme to apo-cytochromes in a process facilitated by CcmF and CcmH. The protein is Cytochrome c-type biogenesis protein CcmE of Methylobacterium radiotolerans (strain ATCC 27329 / DSM 1819 / JCM 2831 / NBRC 15690 / NCIMB 10815 / 0-1).